The following is a 306-amino-acid chain: D-alanine--D-alanine ligase (306 aa).

The ATP-grasp domain occupies 106–301; sequence KLLWQSAGIN…FEELVLKILG (196 aa). 132 to 187 lines the ATP pocket; that stretch reads AKELGLPLIVKPSREGSTIGLSKVREAGEVAAAWHLAARHDAMVLAEQFIEGTELT. Residues Asp255, Glu268, and Asn270 each coordinate Mg(2+).

Belongs to the D-alanine--D-alanine ligase family. Requires Mg(2+) as cofactor. The cofactor is Mn(2+).

Its subcellular location is the cytoplasm. It catalyses the reaction 2 D-alanine + ATP = D-alanyl-D-alanine + ADP + phosphate + H(+). It participates in cell wall biogenesis; peptidoglycan biosynthesis. Cell wall formation. This Nitrosospira multiformis (strain ATCC 25196 / NCIMB 11849 / C 71) protein is D-alanine--D-alanine ligase.